Here is a 170-residue protein sequence, read N- to C-terminus: Zinc finger protein 576 (170 aa).

Positions 1–29 (MEDPNPEENMKQQDSPKERSPQSPGGNIC) are disordered. A compositionally biased stretch (basic and acidic residues) spans 8–20 (ENMKQQDSPKERS). 4 consecutive C2H2-type zinc fingers follow at residues 34–57 (PKCT…KREH), 71–93 (FICF…QRSH), 112–134 (FPCP…RQMH), and 143–165 (FACT…YIRH).

The protein belongs to the krueppel C2H2-type zinc-finger protein family.

It is found in the nucleus. May be involved in transcriptional regulation. The protein is Zinc finger protein 576 (ZNF576) of Homo sapiens (Human).